Here is a 371-residue protein sequence, read N- to C-terminus: Cyclic AMP-responsive element-binding protein 3 (371 aa).

A transcription activation (acidic) region spans residues 1 to 92; that stretch reads MELELDAGDQ…LPRETVSMDL (92 aa). Residues 1 to 230 lie on the Cytoplasmic side of the membrane; sequence MELELDAGDQ…SNKTSSSSTC (230 aa). 2 consecutive short sequence motifs (LXXLL motif) follow at residues 13–17 and 54–58; these read LAFLL and LCSLL. Residues 78–81 carry the HCFC1-binding-motif (HBM) motif; it reads DHTY. Positions 150 to 213 constitute a bZIP domain; the sequence is ILKRVRRKIR…LSLLDQLRKL (64 aa). A basic motif region spans residues 152 to 184; sequence KRVRRKIRNKRSAQESRRKKKVYVGGLESRVLK. A leucine-zipper region spans residues 192–213; the sequence is LQNKVQLLEEQNLSLLDQLRKL. Residues 231–247 form a helical; Signal-anchor for type II membrane protein membrane-spanning segment; that stretch reads ILVLLVSFCLLLVPAMY. At 248-371 the chain is on the lumenal side; it reads SSDTRGSLPA…SVILQDRYSG (124 aa). Residues Asn307 and Asn348 are each glycosylated (N-linked (GlcNAc...) asparagine).

This sequence belongs to the bZIP family. ATF subfamily. Homodimer. Isoform 1 interacts with HCFC1; the interaction is required to stimulate CREB3 transcriptional activity. Isoform 1 interacts with CREBZF; the interaction occurs only in combination with HCFC1. Isoform 1 interacts (via central part and transmembrane region) with DCSTAMP (via C-terminus cytoplasmic domain). Isoform 1 interacts with OS9. Isoform 1 interacts (via leucine-zipper domain) with CREBRF (via leucine-zipper domain); the interaction occurs only after CREB3 activation and promotes CREB3 degradation. Isoform 1 interacts (via C-terminal domain) with CCR1. As to quaternary structure, (Microbial infection) Interacts with the HCV core protein; homodimerization is prevented by the HCV core protein. Isoform 1 interacts (via leucine-zipper and transmembrane domains) with HIV-1 TMgp41 (via cytoplasmic domain); the interaction reduces CREB3 stability. Processed cyclic AMP-responsive element-binding protein 3 interacts with HIV-1 Tat. In terms of processing, first proteolytically cleaved by site-1 protease (S1P) that generates membrane-associated N-terminus and a luminal C-terminus forms. The membrane-associated N-terminus form is further proteolytically processed probably by the site-2 protease (S2P) through a regulated intramembrane proteolysis (RIP), releasing the transcriptional active processed cyclic AMP-responsive element-binding protein 3 form, which is transported to the nucleus. The proteolytic cleavage is strongly induced during dendritic cell (DC) maturation and inhibited by DCSTAMP. That form is rapidly degraded. N-glycosylated. As to expression, ubiquitously expressed. Expressed in dendritic cells (DC). Weakly expressed in monocytes (at protein level).

Its subcellular location is the endoplasmic reticulum membrane. It is found in the golgi apparatus. The protein resides in the cytoplasm. The protein localises to the nucleus. Its function is as follows. Endoplasmic reticulum (ER)-bound sequence-specific transcription factor that directly binds DNA and activates transcription. Plays a role in the unfolded protein response (UPR), promoting cell survival versus ER stress-induced apoptotic cell death. Also involved in cell proliferation, migration and differentiation, tumor suppression and inflammatory gene expression. Acts as a positive regulator of LKN-1/CCL15-induced chemotaxis signaling of leukocyte cell migration. Associates with chromatin to the HERPUD1 promoter. Also induces transcriptional activation of chemokine receptors. Functionally, (Microbial infection) Plays a role in human immunodeficiency virus type 1 (HIV-1) virus protein expression. (Microbial infection) May play a role as a cellular tumor suppressor that is targeted by the hepatitis C virus (HCV) core protein. In terms of biological role, (Microbial infection) Plays a role in herpes simplex virus-1 (HSV-1) latent infection and reactivation from latency. Represses the VP16-mediated transactivation of immediate early genes of the HSV-1 virus by sequestering host cell factor-1 HCFC1 in the ER membrane of sensory neurons, thereby preventing the initiation of the replicative cascade leading to latent infection. Its function is as follows. Functions as a negative transcriptional regulator in ligand-induced transcriptional activation of the glucocorticoid receptor NR3C1 by recruiting and activating histone deacetylases (HDAC1, HDAC2 and HDAC6). Also decreases the acetylation level of histone H4. Does not promote the chemotactic activity of leukocyte cells. Functionally, this is the transcriptionally active form that translocates to the nucleus and activates unfolded protein response (UPR) target genes during endoplasmic reticulum (ER) stress response. Binds the cAMP response element (CRE) (consensus: 5'-GTGACGT[AG][AG]-3') and C/EBP sequences present in many promoters to activate transcription of the genes. Binds to the unfolded protein response element (UPRE) consensus sequences sites. Binds DNA to the 5'-CCAC[GA]-3'half of ERSE II (5'-ATTGG-N-CCACG-3'). (Microbial infection) Activates transcription of genes required for reactivation of the latent HSV-1 virus. It's transcriptional activity is inhibited by CREBZF in a HCFC1-dependent manner, by the viral transactivator protein VP16. Binds DNA to the cAMP response element (CRE) (consensus: 5'-GTGACGT[AG][AG]-3') and C/EBP sequences present in many viral promoters. In terms of biological role, (Microbial infection) It's transcriptional activity is inhibited by CREBZF in a HCFC1-dependent manner, by the viral transactivator HCV core protein. The polypeptide is Cyclic AMP-responsive element-binding protein 3 (CREB3) (Homo sapiens (Human)).